Consider the following 98-residue polypeptide: Elicitin Vex1 (98 aa).

Intrachain disulfides connect Cys3/Cys71, Cys27/Cys56, and Cys51/Cys95. Residue Asn92 is glycosylated (N-linked (GlcNAc...) asparagine).

Belongs to the elicitin family.

The protein localises to the secreted. In terms of biological role, induces local and distal defense responses (incompatible hypersensitive reaction) in plants from the solanaceae and cruciferae families. Elicits leaf necrosis and causes the accumulation of pathogenesis-related proteins. Might interact with the lipidic molecules of the plasma membrane. The polypeptide is Elicitin Vex1 (Phytopythium vexans (Damping-off fungus)).